We begin with the raw amino-acid sequence, 411 residues long: Glutamate dehydrogenase 3, mitochondrial (411 aa).

A mitochondrion-targeting transit peptide spans 1–18 (MNALAATSRNFRQAARLL). Lys-102 is a catalytic residue.

The protein belongs to the Glu/Leu/Phe/Val dehydrogenases family. As to expression, barely expressed in leaves, spikelets and roots. Glumes and stamens specific accumulation.

It localises to the mitochondrion. It carries out the reaction L-glutamate + NAD(+) + H2O = 2-oxoglutarate + NH4(+) + NADH + H(+). It catalyses the reaction L-glutamate + NADP(+) + H2O = 2-oxoglutarate + NH4(+) + NADPH + H(+). This chain is Glutamate dehydrogenase 3, mitochondrial (GDH3), found in Oryza sativa subsp. japonica (Rice).